We begin with the raw amino-acid sequence, 194 residues long: Peptidyl-tRNA hydrolase (194 aa).

Tyr-16 is a binding site for tRNA. His-21 (proton acceptor) is an active-site residue. Residues Phe-67, Asn-69, and Asn-115 each coordinate tRNA.

The protein belongs to the PTH family. In terms of assembly, monomer.

The protein localises to the cytoplasm. The enzyme catalyses an N-acyl-L-alpha-aminoacyl-tRNA + H2O = an N-acyl-L-amino acid + a tRNA + H(+). Its function is as follows. Hydrolyzes ribosome-free peptidyl-tRNAs (with 1 or more amino acids incorporated), which drop off the ribosome during protein synthesis, or as a result of ribosome stalling. Catalyzes the release of premature peptidyl moieties from peptidyl-tRNA molecules trapped in stalled 50S ribosomal subunits, and thus maintains levels of free tRNAs and 50S ribosomes. The protein is Peptidyl-tRNA hydrolase of Salmonella agona (strain SL483).